We begin with the raw amino-acid sequence, 37 residues long: Large ribosomal subunit protein bL36 (37 aa).

The protein belongs to the bacterial ribosomal protein bL36 family.

The polypeptide is Large ribosomal subunit protein bL36 (Chromobacterium violaceum (strain ATCC 12472 / DSM 30191 / JCM 1249 / CCUG 213 / NBRC 12614 / NCIMB 9131 / NCTC 9757 / MK)).